A 237-amino-acid chain; its full sequence is Large ribosomal subunit protein uL1 (237 aa).

Belongs to the universal ribosomal protein uL1 family. In terms of assembly, part of the 50S ribosomal subunit.

Its function is as follows. Binds directly to 23S rRNA. The L1 stalk is quite mobile in the ribosome, and is involved in E site tRNA release. Functionally, protein L1 is also a translational repressor protein, it controls the translation of the L11 operon by binding to its mRNA. This Dehalococcoides mccartyi (strain ATCC BAA-2266 / KCTC 15142 / 195) (Dehalococcoides ethenogenes (strain 195)) protein is Large ribosomal subunit protein uL1.